A 131-amino-acid chain; its full sequence is Profilin-8 (131 aa).

Cys-13 and Cys-115 are joined by a disulfide. Residues 81–97 carry the Involved in PIP2 interaction motif; that stretch reads AVIRGKKGAGGITIKKT. A Phosphothreonine modification is found at Thr-111.

Belongs to the profilin family. Occurs in many kinds of cells as a complex with monomeric actin in a 1:1 ratio. In terms of processing, phosphorylated by MAP kinases.

Its subcellular location is the cytoplasm. It is found in the cytoskeleton. Its function is as follows. Binds to actin and affects the structure of the cytoskeleton. At high concentrations, profilin prevents the polymerization of actin, whereas it enhances it at low concentrations. The protein is Profilin-8 of Phleum pratense (Common timothy).